The chain runs to 411 residues: Phospholipase ABHD3 (411 aa).

A helical; Signal-anchor for type II membrane protein membrane pass occupies residues 25-45; it reads VGFFGSGVGLSLILGFSVAYA. The AB hydrolase-1 domain maps to 140-233; the sequence is PTILLLPGLT…MLLLNYLGKI (94 aa). Catalysis depends on charge relay system residues Ser-220, Asp-346, and His-375.

Belongs to the AB hydrolase superfamily. AB hydrolase 4 family. In terms of tissue distribution, widely expressed with higher expression in liver.

The protein resides in the membrane. The catalysed reaction is a 1,2-diacyl-sn-glycero-3-phosphocholine + H2O = a 1-acyl-sn-glycero-3-phosphocholine + a fatty acid + H(+). It catalyses the reaction a 1,2-diacyl-sn-glycero-3-phosphocholine + H2O = a 2-acyl-sn-glycero-3-phosphocholine + a fatty acid + H(+). The enzyme catalyses 1-tetradecanoyl-2-(9Z,12Z-octadecadienoyl)-sn-glycero-3-phosphocholine + H2O = 2-(9Z,12Z-octadecadienoyl)-sn-glycero-3-phosphocholine + tetradecanoate + H(+). It carries out the reaction 1-tetradecanoyl-2-(9Z,12Z-octadecadienoyl)-sn-glycero-3-phosphocholine + H2O = 1-tetradecanoyl-sn-glycero-3-phosphocholine + (9Z,12Z)-octadecadienoate + H(+). The catalysed reaction is 1-tetradecanoyl-2-(5Z,8Z,11Z,14Z-eicosatetraenoyl)-sn-glycero-3-phosphocholine + H2O = 2-(5Z,8Z,11Z,14Z)-eicosatetraenoyl-sn-glycero-3-phosphocholine + tetradecanoate + H(+). It catalyses the reaction 1-tetradecanoyl-2-(4Z,7Z,10Z,13Z,16Z,19Z-docosahexaenoyl)-sn-glycero-3-phosphocholine + H2O = 2-(4Z,7Z,10Z,13Z,16Z,19Z-docosahexaenoyl)-sn-glycero-3-phosphocholine + tetradecanoate + H(+). The enzyme catalyses 1,2-ditetradecanoyl-sn-glycero-3-phosphocholine + H2O = 2-tetradecanoyl-sn-glycero-3-phosphocholine + tetradecanoate + H(+). It carries out the reaction 1-octadecanoyl-2-acetyl-sn-glycero-3-phosphocholine + H2O = 1-octadecanoyl-sn-glycero-3-phosphocholine + acetate + H(+). The catalysed reaction is 1,2-ditetradecanoyl-sn-glycero-3-phosphocholine + H2O = 1-tetradecanoyl-sn-glycero-3-phosphocholine + tetradecanoate + H(+). It catalyses the reaction 1-octadecanoyl-2-pentanoyl-sn-glycero-3-phosphocholine + H2O = pentanoate + 1-octadecanoyl-sn-glycero-3-phosphocholine + H(+). The enzyme catalyses 1-octadecanoyl-2-hexanoyl-sn-glycero-3-phosphocholine + H2O = hexanoate + 1-octadecanoyl-sn-glycero-3-phosphocholine + H(+). It carries out the reaction 1-octadecanoyl-2-octanoyl-sn-glycero-3-phosphocholine + H2O = 1-octadecanoyl-sn-glycero-3-phosphocholine + octanoate + H(+). The catalysed reaction is 1-octadecanoyl-2-nonanoyl-sn-glycero-3-phosphocholine + H2O = nonanoate + 1-octadecanoyl-sn-glycero-3-phosphocholine + H(+). It catalyses the reaction 1-O-hexadecyl-2-nonadioyl-sn-glycero-3-phosphocholine + H2O = nonanedioate + 1-O-hexadecyl-sn-glycero-3-phosphocholine + H(+). The enzyme catalyses 1-hexadecanoyl-2-nonadioyl-sn-glycero-3-phosphocholine + H2O = nonanedioate + 1-hexadecanoyl-sn-glycero-3-phosphocholine + H(+). It carries out the reaction 1-hexadecanoyl-2-(9-oxononanoyl)-sn-glycero-3-phosphocholine + H2O = 9-oxononanoate + 1-hexadecanoyl-sn-glycero-3-phosphocholine + H(+). The catalysed reaction is 1-hexadecanoyl-2-(5-oxopentanoyl)-sn-glycero-3-phosphocholine + H2O = 5-oxopentanoate + 1-hexadecanoyl-sn-glycero-3-phosphocholine + H(+). It catalyses the reaction 1-hexadecanoyl-2-glutaroyl-sn-glycero-3-phosphocholine + H2O = glutarate + 1-hexadecanoyl-sn-glycero-3-phosphocholine + H(+). The enzyme catalyses 1-O-hexadecyl-2-acetyl-sn-glycero-3-phosphocholine + H2O = 1-O-hexadecyl-sn-glycero-3-phosphocholine + acetate + H(+). Its function is as follows. Phospholipase that may play a role in phospholipids remodeling. May selectively cleave myristate (C14)-containing phosphatidylcholines through its predominant phospholipase 1 activity, cleaving preferentially acyl groups in sn1 position. In parallel, may have a minor phospholipase 2 activity acting on acyl groups in position sn2. In addition to (C14)-containing phosphatidylcholines, may also act on other medium-chain-containing and oxidatively truncated phospholipids. The protein is Phospholipase ABHD3 of Mus musculus (Mouse).